The following is a 476-amino-acid chain: Lactate utilization protein B (476 aa).

4Fe-4S ferredoxin-type domains follow at residues 304–334 (GTEF…GHSY) and 353–382 (YDEY…LHEL). [4Fe-4S] cluster-binding residues include C313, C316, C319, C323, C366, C369, and C373.

This sequence belongs to the LutB/YkgF family.

Its function is as follows. Is involved in L-lactate degradation and allows cells to grow with lactate as the sole carbon source. Has probably a role as an electron transporter during oxidation of L-lactate. This chain is Lactate utilization protein B, found in Bacillus velezensis (strain DSM 23117 / BGSC 10A6 / LMG 26770 / FZB42) (Bacillus amyloliquefaciens subsp. plantarum).